The following is a 316-amino-acid chain: Porphobilinogen deaminase (316 aa).

Position 240 is an S-(dipyrrolylmethanemethyl)cysteine (cysteine 240).

The protein belongs to the HMBS family. In terms of assembly, monomer. The cofactor is dipyrromethane.

The catalysed reaction is 4 porphobilinogen + H2O = hydroxymethylbilane + 4 NH4(+). It functions in the pathway porphyrin-containing compound metabolism; protoporphyrin-IX biosynthesis; coproporphyrinogen-III from 5-aminolevulinate: step 2/4. Tetrapolymerization of the monopyrrole PBG into the hydroxymethylbilane pre-uroporphyrinogen in several discrete steps. The chain is Porphobilinogen deaminase from Alkaliphilus metalliredigens (strain QYMF).